Reading from the N-terminus, the 523-residue chain is Apoptosis inhibitor 5-B (523 aa).

The segment at 1 to 360 (MPTVEELYRN…HQLGRKLPDF (360 aa)) is ARM-like and Heat-like helical repeats. Residues 446 to 523 (VQKTDSGQKR…RGNRSRGRIY (78 aa)) are disordered. The short motif at 454-475 (KRMSDETSSTSPPKKPVVGPKR) is the Nuclear localization signal element. The span at 502 to 515 (GFQGGRGRGWGGRG) shows a compositional bias: gly residues.

The protein belongs to the API5 family. Monomer.

The protein resides in the nucleus. Its function is as follows. May be an antiapoptotic factor. This is Apoptosis inhibitor 5-B (api5-b) from Xenopus laevis (African clawed frog).